The sequence spans 429 residues: 3-phosphoshikimate 1-carboxyvinyltransferase (429 aa).

The 3-phosphoshikimate site is built by K11, S12, and R16. K11 contributes to the phosphoenolpyruvate binding site. Positions 82 and 110 each coordinate phosphoenolpyruvate. 3-phosphoshikimate contacts are provided by S155, Q157, D302, and K329. Q157 lines the phosphoenolpyruvate pocket. Residue D302 is the Proton acceptor of the active site. R333 and R385 together coordinate phosphoenolpyruvate.

It belongs to the EPSP synthase family. As to quaternary structure, monomer.

The protein localises to the cytoplasm. It catalyses the reaction 3-phosphoshikimate + phosphoenolpyruvate = 5-O-(1-carboxyvinyl)-3-phosphoshikimate + phosphate. Its pathway is metabolic intermediate biosynthesis; chorismate biosynthesis; chorismate from D-erythrose 4-phosphate and phosphoenolpyruvate: step 6/7. Functionally, catalyzes the transfer of the enolpyruvyl moiety of phosphoenolpyruvate (PEP) to the 5-hydroxyl of shikimate-3-phosphate (S3P) to produce enolpyruvyl shikimate-3-phosphate and inorganic phosphate. This chain is 3-phosphoshikimate 1-carboxyvinyltransferase, found in Helicobacter pylori (strain HPAG1).